Consider the following 358-residue polypeptide: CCAAT/enhancer-binding protein alpha (358 aa).

The disordered stretch occupies residues 1 to 55 (MESADFYEAEPRPPMSSHLQSPPHAPSSAAFGFPRGAGPAQPPAPPAAPEPLGGI). The interval 1–70 (MESADFYEAE…SIDISAYIDP (70 aa)) is required to repress E2F1:TFDP1-mediated transcription, to inhibit cell cycle and to induce adipocyte differentiation. Over residues 29-39 (AAFGFPRGAGP) the composition is skewed to low complexity. A compositionally biased stretch (pro residues) spans 40–49 (AQPPAPPAAP). A required for interaction with TRIB1 region spans residues 54–72 (GICEHETSIDISAYIDPAA). The required to induce adipocyte differentiation stretch occupies residues 128–204 (PPGYGCAAAG…HPPPAHLAAP (77 aa)). K161 is subject to N6-acetyllysine; alternate. Residue K161 forms a Glycyl lysine isopeptide (Lys-Gly) (interchain with G-Cter in SUMO2); alternate linkage. Disordered regions lie at residues 178-201 (LFPY…PAHL) and 217-291 (TMHL…RRER). Pro residues-rich tracts occupy residues 181 to 199 (YQPP…PPPA) and 224 to 238 (HPTP…PHPA). The interval 182–198 (QPPPPPPPSHPHPHPPP) is required to functionally cooperate with SREBF1 in promoter activation. S190 bears the Phosphoserine mark. A phosphothreonine; by GSK3 mark is found at T226 and T230. At S234 the chain carries Phosphoserine; by GSK3. Positions 239-259 (PALGAAGLPGPGSALKGLGAA) are enriched in low complexity. The interval 244–358 (AGLPGPGSAL…SLVKAMGNCA (115 aa)) is interaction with FOXO1. The segment covering 276–291 (KSVDKNSNEYRVRRER) has biased composition (basic and acidic residues). The region spanning 282-345 (SNEYRVRRER…DTLRGIFRQL (64 aa)) is the bZIP domain. The DNA-binding element occupies 285–300 (YRVRRERNNIAVRKSR). The basic motif stretch occupies residues 286-313 (RVRRERNNIAVRKSRDKAKQRNVETQQK). The segment at 317–345 (LTSDNDRLRKRVEQLSRELDTLRGIFRQL) is leucine-zipper.

This sequence belongs to the bZIP family. C/EBP subfamily. As to quaternary structure, binds DNA as a homodimer and as a heterodimer. Can form stable heterodimers with CEBPB, CEBPD, CEBPE and CEBPG. Interacts with PRDM16. Interacts with UBN1. Interacts with ZNF638; this interaction increases transcriptional activation. Interacts with the complex TFDP2:E2F1; the interaction prevents CEBPA binding to target gene promoters and represses its transcriptional activity. Interacts with RB1. Interacts (when phosphorylated at Ser-190) with CDK2, CDK4, E2F4 and SMARCA2. Interacts with SREBPF1. Interacts with FOXO1 (via the Fork-head domain); the interaction increases when FOXO1 is deacetylated. Interacts with SIX1. Interacts (via recognition sequence) with TRIB1. Interacts (via bZIP domain) with OVOL2 (via zinc-finger domains); the interaction inhibits the transcription factor activity of CEBPA and is required to repress adipogenesis. In terms of assembly, interacts with TAF1A and UBTF. Interacts with TAF1A and UBTF. Interacts with NPM1. As to quaternary structure, (Microbial infection) Interacts with HBV protein X. In terms of assembly, (Microbial infection) Interacts with Epstein-Barr virus lytic switch protein BZLF1; this interaction induces G1 cell cycle arrest. Post-translationally, phosphorylation at Ser-190 is required for interaction with CDK2, CDK4 and SWI/SNF complex leading to cell cycle inhibition. Dephosphorylated at Ser-190 by protein phosphatase 2A (PP2A) through PI3K/AKT signaling pathway regulation. Phosphorylation at Thr-226 and Thr-230 by GSK3 is constitutive in adipose tissue and lung. In liver, both Thr-226 and Thr-230 are phosphorylated only during feeding but not during fasting. Phosphorylation of the GSK3 consensus sites selectively decreases transactivation activity on IRE-controlled promoters. In terms of processing, sumoylated, sumoylation blocks the inhibitory effect on cell proliferation by disrupting the interaction with SMARCA2. Ubiquitinated by COP1 upon interaction with TRIB1.

The protein resides in the nucleus. The protein localises to the nucleolus. Transcription factor that coordinates proliferation arrest and the differentiation of myeloid progenitors, adipocytes, hepatocytes, and cells of the lung and the placenta. Binds directly to the consensus DNA sequence 5'-T[TG]NNGNAA[TG]-3' acting as an activator on distinct target genes. During early embryogenesis, plays essential and redundant functions with CEBPB. Essential for the transition from common myeloid progenitors (CMP) to granulocyte/monocyte progenitors (GMP). Critical for the proper development of the liver and the lung. Necessary for terminal adipocyte differentiation, is required for postnatal maintenance of systemic energy homeostasis and lipid storage. To regulate these different processes at the proper moment and tissue, interplays with other transcription factors and modulators. Down-regulates the expression of genes that maintain cells in an undifferentiated and proliferative state through E2F1 repression, which is critical for its ability to induce adipocyte and granulocyte terminal differentiation. Reciprocally E2F1 blocks adipocyte differentiation by binding to specific promoters and repressing CEBPA binding to its target gene promoters. Proliferation arrest also depends on a functional binding to SWI/SNF complex. In liver, regulates gluconeogenesis and lipogenesis through different mechanisms. To regulate gluconeogenesis, functionally cooperates with FOXO1 binding to IRE-controlled promoters and regulating the expression of target genes such as PCK1 or G6PC1. To modulate lipogenesis, interacts and transcriptionally synergizes with SREBF1 in promoter activation of specific lipogenic target genes such as ACAS2. In adipose tissue, seems to act as FOXO1 coactivator accessing to ADIPOQ promoter through FOXO1 binding sites. Its function is as follows. Can act as dominant-negative. Binds DNA and have transctivation activity, even if much less efficiently than isoform 2. Does not inhibit cell proliferation. Functionally, directly and specifically enhances ribosomal DNA transcription interacting with RNA polymerase I-specific cofactors and inducing histone acetylation. The sequence is that of CCAAT/enhancer-binding protein alpha from Homo sapiens (Human).